Here is a 357-residue protein sequence, read N- to C-terminus: LINE-1 retrotransposable element ORF1 protein (357 aa).

The disordered stretch occupies residues 1–40; it reads MAKGKRKNPTNRNQDHSPSSERSTPTPPSPGHPNTTENLD. Residues 59-156 adopt a coiled-coil conformation; sequence HKSLKDLQES…IENIDTTVKE (98 aa). The RNA recognition motif (RRM) domain stretch occupies residues 179–274; the sequence is NLRIIGIDEN…KGRPIRITPD (96 aa). The interval 278-339 is C-terminal domain (CTD); that stretch reads ETMKARRAWT…STNPALQRII (62 aa).

It belongs to the transposase 22 family. As to quaternary structure, homotrimer (via coiled coil domain). May also form larger homooligomers. Interacts with Tex19.1 and UBR2. Interacts with MOV10. In terms of processing, polyubiquitinated, probably by UBR2, which induces its degradation. Expressed in meiotic spermatocytes and in the cerebellum (at protein level).

It is found in the nucleus. The protein localises to the nucleolus. The protein resides in the cytoplasm. It localises to the cytoplasmic ribonucleoprotein granule. Its subcellular location is the stress granule. Its function is as follows. Nucleic acid-binding protein which is essential for retrotransposition of LINE-1 elements in the genome. Functions as a nucleic acid chaperone binding its own transcript and therefore preferentially mobilizing the transcript from which they are encoded. The polypeptide is LINE-1 retrotransposable element ORF1 protein (Mus musculus (Mouse)).